The following is a 303-amino-acid chain: L(+)-tartrate dehydratase subunit alpha (303 aa).

3 residues coordinate iron-sulfur cluster: Cys-71, Cys-190, and Cys-277.

It belongs to the class-I fumarase family. As to quaternary structure, tetramer of two alpha and two beta subunits. Iron-sulfur cluster serves as cofactor.

The catalysed reaction is (2R,3R)-tartrate = oxaloacetate + H2O. This chain is L(+)-tartrate dehydratase subunit alpha (ttdA), found in Escherichia coli O6:K15:H31 (strain 536 / UPEC).